Consider the following 177-residue polypeptide: VKSTNLMAFVATKMLERQEDLDTCTEMQVEKMKTSTKARLRTESSFAPRTWEDAIKDEILRRSVDTSSLDKWPELKQELENVSDALKADSLWLPMKSLSLYSKVSNQEPSSIPIGEMKHQILTRLKLICSRLEKLDLNLSKAVLGIQNSEDLILIIYNRDVCKNTILMIKSLCNSLI.

2 short sequence motifs (nuclear export signal) span residues 91–100 (LWLPMKSLSL) and 117–127 (MKHQILTRLKL).

Binds M1 protein. May interact with human nucleoporins and exportin XPO1/CRM1.

The protein localises to the virion. It is found in the host nucleus. Functionally, mediates the nuclear export of encapsidated genomic RNAs (ribonucleoproteins, RNPs). Acts as an adapter between viral RNPs complexes and the nuclear export machinery of the cell. Possesses no intrinsic RNA-binding activity, but includes a C-terminal M1-binding domain. This domain is believed to allow recognition of RNPs to which the M1 protein is bound. Because the M1 protein is not available in large quantities until the later stages of infection, such an indirect recognition mechanism probably ensures that genomic RNPs are not exported from the nucleus before sufficient quantities of viral mRNA and progeny genomic RNA have been synthesized. Furthermore, the RNPs enters the cytoplasm only when they have associated with the M1 protein that is necessary to guide them to the plasma membrane. May down-regulate viral RNA synthesis when overproduced. In Homo sapiens (Human), this protein is Nuclear export protein (NS).